A 785-amino-acid polypeptide reads, in one-letter code: Endonuclease MutS2 (785 aa).

335-342 (GPNTGGKT) provides a ligand contact to ATP. In terms of domain architecture, Smr spans 710 to 785 (LDLRGERYED…GNGVTIVEFK (76 aa)).

It belongs to the DNA mismatch repair MutS family. MutS2 subfamily. As to quaternary structure, homodimer. Binds to stalled ribosomes, contacting rRNA.

Functionally, endonuclease that is involved in the suppression of homologous recombination and thus may have a key role in the control of bacterial genetic diversity. Acts as a ribosome collision sensor, splitting the ribosome into its 2 subunits. Detects stalled/collided 70S ribosomes which it binds and splits by an ATP-hydrolysis driven conformational change. Acts upstream of the ribosome quality control system (RQC), a ribosome-associated complex that mediates the extraction of incompletely synthesized nascent chains from stalled ribosomes and their subsequent degradation. Probably generates substrates for RQC. In Listeria monocytogenes serotype 4a (strain HCC23), this protein is Endonuclease MutS2.